Here is a 289-residue protein sequence, read N- to C-terminus: Acetyl-coenzyme A carboxylase carboxyl transferase subunit beta (289 aa).

Residues 28–289 form the CoA carboxyltransferase N-terminal domain; the sequence is VMTKCPKCKK…QGGGMAVWQS (262 aa). Positions 32, 35, 51, and 54 each coordinate Zn(2+). The segment at 32 to 54 adopts a C4-type zinc-finger fold; it reads CPKCKKIMYTKELLKNLKVCVNC.

Belongs to the AccD/PCCB family. As to quaternary structure, acetyl-CoA carboxylase is a heterohexamer composed of biotin carboxyl carrier protein (AccB), biotin carboxylase (AccC) and two subunits each of ACCase subunit alpha (AccA) and ACCase subunit beta (AccD). Zn(2+) serves as cofactor.

The protein resides in the cytoplasm. The enzyme catalyses N(6)-carboxybiotinyl-L-lysyl-[protein] + acetyl-CoA = N(6)-biotinyl-L-lysyl-[protein] + malonyl-CoA. It participates in lipid metabolism; malonyl-CoA biosynthesis; malonyl-CoA from acetyl-CoA: step 1/1. In terms of biological role, component of the acetyl coenzyme A carboxylase (ACC) complex. Biotin carboxylase (BC) catalyzes the carboxylation of biotin on its carrier protein (BCCP) and then the CO(2) group is transferred by the transcarboxylase to acetyl-CoA to form malonyl-CoA. The sequence is that of Acetyl-coenzyme A carboxylase carboxyl transferase subunit beta from Bacillus mycoides (strain KBAB4) (Bacillus weihenstephanensis).